Consider the following 462-residue polypeptide: A-type ATP synthase subunit B (462 aa).

The protein belongs to the ATPase alpha/beta chains family. Has multiple subunits with at least A(3), B(3), C, D, E, F, H, I and proteolipid K(x).

The protein localises to the cell membrane. Functionally, component of the A-type ATP synthase that produces ATP from ADP in the presence of a proton gradient across the membrane. The B chain is a regulatory subunit. The sequence is that of A-type ATP synthase subunit B from Pyrococcus abyssi (strain GE5 / Orsay).